Consider the following 185-residue polypeptide: HTH-type transcriptional regulator PuuR (185 aa).

The tract at residues 1 to 20 is disordered; that stretch reads MSDEGLAPGKRLSEIRQQQG. The HTH cro/C1-type domain occupies 12–66; that stretch reads LSEIRQQQGLSQRRAAELSGLTHSAISTIEQDKVSPAISTLQKLLKVYGLSLSEF. The H-T-H motif DNA-binding region spans 23–42; sequence QRRAAELSGLTHSAISTIEQ. A Cupin type-2 domain is found at 111–178; it reads FETYQPGTTT…TSAGICRIIS (68 aa).

Its pathway is amine and polyamine degradation; putrescine degradation [regulation]. Functionally, represses puuA, puuD and puuP. The chain is HTH-type transcriptional regulator PuuR (puuR) from Escherichia coli (strain K12).